Reading from the N-terminus, the 347-residue chain is Phospho-N-acetylmuramoyl-pentapeptide-transferase (347 aa).

10 helical membrane passes run 10–30 (SLVF…IFLG), 67–87 (AGGI…LPLG), 91–111 (TWLF…DDIV), 127–147 (FVLQ…IYKG), 164–184 (LGHS…AIVG), 195–215 (LDGL…VVAV), 220–240 (IPLA…SLAF), 250–270 (VFMG…CAVM), 275–295 (LLLI…ILQI), and 325–345 (VVKR…IAAL).

Belongs to the glycosyltransferase 4 family. MraY subfamily. Requires Mg(2+) as cofactor.

It localises to the cell inner membrane. It catalyses the reaction UDP-N-acetyl-alpha-D-muramoyl-L-alanyl-gamma-D-glutamyl-meso-2,6-diaminopimeloyl-D-alanyl-D-alanine + di-trans,octa-cis-undecaprenyl phosphate = di-trans,octa-cis-undecaprenyl diphospho-N-acetyl-alpha-D-muramoyl-L-alanyl-D-glutamyl-meso-2,6-diaminopimeloyl-D-alanyl-D-alanine + UMP. It functions in the pathway cell wall biogenesis; peptidoglycan biosynthesis. Catalyzes the initial step of the lipid cycle reactions in the biosynthesis of the cell wall peptidoglycan: transfers peptidoglycan precursor phospho-MurNAc-pentapeptide from UDP-MurNAc-pentapeptide onto the lipid carrier undecaprenyl phosphate, yielding undecaprenyl-pyrophosphoryl-MurNAc-pentapeptide, known as lipid I. This Chlamydia abortus (strain DSM 27085 / S26/3) (Chlamydophila abortus) protein is Phospho-N-acetylmuramoyl-pentapeptide-transferase.